A 349-amino-acid chain; its full sequence is NADP-dependent alcohol dehydrogenase C 1 (349 aa).

The Zn(2+) site is built by Cys-41, His-63, Cys-94, Cys-97, Cys-100, Cys-108, and Cys-159. An Isoglutamyl lysine isopeptide (Lys-Gln) (interchain with Q-Cter in protein Pup) cross-link involves residue Lys-210.

Belongs to the zinc-containing alcohol dehydrogenase family. Zn(2+) is required as a cofactor.

The enzyme catalyses a primary alcohol + NADP(+) = an aldehyde + NADPH + H(+). Its function is as follows. Prefers aldehydes over alcohols. In Mycolicibacterium smegmatis (strain ATCC 700084 / mc(2)155) (Mycobacterium smegmatis), this protein is NADP-dependent alcohol dehydrogenase C 1 (adhc1).